Reading from the N-terminus, the 263-residue chain is N-glycosylase/DNA lyase (263 aa).

Residues Gln-43, Ser-71, and Trp-82 each contribute to the 8-oxoguanine site. Residues 139 to 204 (RRYYFENMMG…EDVRIKAYTE (66 aa)) are helix-hairpin-helix. Residue Lys-164 is the Schiff-base intermediate with DNA of the active site. The 8-oxoguanine site is built by Phe-168 and Pro-194. The active site involves Asp-196. Residues Asp-230 and Trp-234 each contribute to the 8-oxoguanine site.

This sequence belongs to the archaeal N-glycosylase/DNA lyase (AGOG) family.

It catalyses the reaction 2'-deoxyribonucleotide-(2'-deoxyribose 5'-phosphate)-2'-deoxyribonucleotide-DNA = a 3'-end 2'-deoxyribonucleotide-(2,3-dehydro-2,3-deoxyribose 5'-phosphate)-DNA + a 5'-end 5'-phospho-2'-deoxyribonucleoside-DNA + H(+). Functionally, DNA repair enzyme that is part of the base excision repair (BER) pathway; protects from oxidative damage by removing the major product of DNA oxidation, 8-oxoguanine (GO), from single- and double-stranded DNA substrates. The protein is N-glycosylase/DNA lyase of Thermococcus kodakarensis (strain ATCC BAA-918 / JCM 12380 / KOD1) (Pyrococcus kodakaraensis (strain KOD1)).